The chain runs to 473 residues: Ribulose bisphosphate carboxylase large chain 3 (473 aa).

N116 and T166 together coordinate substrate. K168 (proton acceptor) is an active-site residue. K170 contacts substrate. Mg(2+) contacts are provided by K194, D196, and E197. K194 is subject to N6-carboxylysine. Residue H287 is the Proton acceptor of the active site. Substrate is bound by residues R288, H320, and S372.

It belongs to the RuBisCO large chain family. Type I subfamily. In terms of assembly, heterohexadecamer of 8 large chains and 8 small chains. Requires Mg(2+) as cofactor.

It carries out the reaction 2 (2R)-3-phosphoglycerate + 2 H(+) = D-ribulose 1,5-bisphosphate + CO2 + H2O. The enzyme catalyses D-ribulose 1,5-bisphosphate + O2 = 2-phosphoglycolate + (2R)-3-phosphoglycerate + 2 H(+). Its function is as follows. RuBisCO catalyzes two reactions: the carboxylation of D-ribulose 1,5-bisphosphate, the primary event in carbon dioxide fixation, as well as the oxidative fragmentation of the pentose substrate. Both reactions occur simultaneously and in competition at the same active site. The chain is Ribulose bisphosphate carboxylase large chain 3 from Nitrobacter hamburgensis (strain DSM 10229 / NCIMB 13809 / X14).